A 1386-amino-acid chain; its full sequence is DNA-directed RNA polymerase subunit beta' (1386 aa).

Positions 75, 77, 90, and 93 each coordinate Zn(2+). Residues Asp466, Asp468, and Asp470 each contribute to the Mg(2+) site. The Zn(2+) site is built by Cys809, Cys883, Cys890, and Cys893.

The protein belongs to the RNA polymerase beta' chain family. As to quaternary structure, the RNAP catalytic core consists of 2 alpha, 1 beta, 1 beta' and 1 omega subunit. When a sigma factor is associated with the core the holoenzyme is formed, which can initiate transcription. It depends on Mg(2+) as a cofactor. Requires Zn(2+) as cofactor.

It carries out the reaction RNA(n) + a ribonucleoside 5'-triphosphate = RNA(n+1) + diphosphate. In terms of biological role, DNA-dependent RNA polymerase catalyzes the transcription of DNA into RNA using the four ribonucleoside triphosphates as substrates. The sequence is that of DNA-directed RNA polymerase subunit beta' from Oleidesulfovibrio alaskensis (strain ATCC BAA-1058 / DSM 17464 / G20) (Desulfovibrio alaskensis).